The sequence spans 59 residues: U-myrmeciitoxin(01)-Mg5a (59 aa).

The N-terminal stretch at 1-21 is a signal peptide; that stretch reads MRLSYLSLALAIIFVLTIMHA. The propeptide occupies 22–38; the sequence is SNVEAKASADPEPDAVG.

In terms of tissue distribution, expressed by the venom gland.

Its subcellular location is the secreted. Functionally, may have antimicrobial properties, like most ant linear peptides. The protein is U-myrmeciitoxin(01)-Mg5a of Myrmecia gulosa (Red bulldog ant).